A 356-amino-acid chain; its full sequence is uncharacterized protein (356 aa).

6 consecutive transmembrane segments (helical) span residues 2 to 22 (FEAIIYNISVTVAGIYLFHRL), 36 to 56 (YVTVLMTIVALLLSAYPVPIF), 77 to 97 (MFYTVLSAFIVGLVNVLIGDY), 99 to 119 (IITAMIFIVIAGIIGAIGPFL), 124 to 144 (IISLQILNVIALVIFAILSLI), and 154 to 174 (LFLIPISFVLTITSSITFVDI). Residues 218 to 353 (QSLGLLLIDI…GRNQVMFNPI (136 aa)) form the GGDEF domain.

The protein resides in the cell membrane. This is an uncharacterized protein from Staphylococcus saprophyticus subsp. saprophyticus (strain ATCC 15305 / DSM 20229 / NCIMB 8711 / NCTC 7292 / S-41).